We begin with the raw amino-acid sequence, 61 residues long: Small ribosomal subunit protein uS14 (61 aa).

Positions 24, 27, 40, and 43 each coordinate Zn(2+).

This sequence belongs to the universal ribosomal protein uS14 family. Zinc-binding uS14 subfamily. In terms of assembly, part of the 30S ribosomal subunit. Contacts proteins S3 and S10. Zn(2+) serves as cofactor.

In terms of biological role, binds 16S rRNA, required for the assembly of 30S particles and may also be responsible for determining the conformation of the 16S rRNA at the A site. This chain is Small ribosomal subunit protein uS14, found in Sulfurimonas denitrificans (strain ATCC 33889 / DSM 1251) (Thiomicrospira denitrificans (strain ATCC 33889 / DSM 1251)).